The following is a 469-amino-acid chain: Beta-1,3-xylanase (469 aa).

The first 22 residues, 1 to 22 (MKKLAKMISIATLGACAFSAHA), serve as a signal peptide directing secretion. The GH26 domain occupies 23-293 (LDGKLVPNEG…LKGFTYINAD (271 aa)). Residue Glu138 is the Proton donor of the active site. The active-site Nucleophile is Glu234. A compositionally biased stretch (gly residues) spans 352–374 (DNGGDNGGDNGGDNGGDNGGDNG). The segment at 352–380 (DNGGDNGGDNGGDNGGDNGGDNGGTEPPE) is disordered. The interval 377–469 (EPPENCQDDF…NITFTTQVCN (93 aa)) is carbohydrate binding module (CBM). 2 cysteine pairs are disulfide-bonded: Cys382–Cys468 and Cys413–Cys418.

Belongs to the glycosyl hydrolase 26 family.

The enzyme catalyses Random hydrolysis of (1-&gt;3)-beta-D-glycosidic linkages in (1-&gt;3)-beta-D-xylans.. Completely inhibited by CuCl(2), FeCl(3), HgCl(2) and N-bromosuccinimide. Moderately inhibited by AgCl, AlCl(3), Pb(CH(3)COO)(2) and dithiothreitol. BaCl(2), CaCl(2), KCl, MgCl(2), MnCl(2), NaCl, ZnCl(2), ethylenediaminetetraacetic acid, N-ethylmaleimide, iodoacetic acid and p-chloromercuribenzoic acid have little or no effect on activity. Catalyzes the hydrolysis of beta-1,3-xylan into oligosaccharides, mainly xylotriose and xylobiose with smaller amounts of xylotetraose, xylose, xylopentaose and xylohexaose. Does not hydrolyze xylobiose, p-nitrophenyl-beta-xyloside, beta-1,4-xylan, carboxymethylcellulose, curdlan, glucomannan or beta-1,4-mannan. This Alcaligenes sp protein is Beta-1,3-xylanase.